A 413-amino-acid chain; its full sequence is Alpha-1-antitrypsin 1-1 (413 aa).

An N-terminal signal peptide occupies residues 1–24 (MTPSISWGLLLLAGLCCLVPSFLA). N64, N101, and N265 each carry an N-linked (GlcNAc...) asparagine glycan. Positions 368-387 (AVTVLQMVPMSMPPILRFDH) are RCL.

It belongs to the serpin family.

The protein resides in the secreted. Its function is as follows. Inhibitor of serine proteases. Its primary target is elastase, but it also has a moderate affinity for plasmin and thrombin. The polypeptide is Alpha-1-antitrypsin 1-1 (Serpina1a) (Mus musculus (Mouse)).